Here is a 240-residue protein sequence, read N- to C-terminus: MATDELASKLSRRLQMEGEGGEATEQPGLNGAAAAAAAEAPDETAQALGSADDELSAKLLRRADLNQGIGEPQSPSRRVFNPYTEFKEFSRKQIKDMEKMFKQYDAGRDGFIDLMELKLMMEKLGAPQTHLGLKSMIQEVDEDFDSKLSFREFLLIFRKAAAGELQEDSGLQVLARLSEIDVSTEGVKGAKNFFEAKVQAINVSSRFEEEIKAEQEERKKQAEEVKQRKAAFKELQSTFK.

The segment at 1–51 (MATDELASKLSRRLQMEGEGGEATEQPGLNGAAAAAAAEAPDETAQALGSA) is disordered. Position 2 is an N-acetylalanine (alanine 2). Serine 11 is subject to Phosphoserine. The span at 32-47 (AAAAAAAEAPDETAQA) shows a compositional bias: low complexity. 2 positions are modified to phosphoserine: serine 74 and serine 76. The residue at position 83 (tyrosine 83) is a Phosphotyrosine. EF-hand domains are found at residues 92 to 127 (KQIK…LGAP) and 128 to 163 (QTHL…AAAG). Aspartate 105, aspartate 109, glutamate 116, aspartate 141, aspartate 143, aspartate 145, lysine 147, and glutamate 152 together coordinate Ca(2+). N6-acetyllysine is present on lysine 233.

Interacts with CASP9; with inactive form. In terms of tissue distribution, detected in thymus, kidney, spleen, lung, liver and brain. Highest abundance in brain and lowest in kidney and thymus.

The protein localises to the membrane raft. In terms of biological role, may regulate B-cell receptor (BCR)-induced immature and primary B-cell apoptosis. Plays a role as negative regulator of the canonical NF-kappa-B-activating branch. Controls spontaneous apoptosis through the regulation of BCL2L1 abundance. The polypeptide is EF-hand domain-containing protein D2 (Efhd2) (Mus musculus (Mouse)).